The following is a 485-amino-acid chain: Zinc finger SWIM domain-containing protein 1 (485 aa).

Residues 363–405 form an SWIM-type zinc finger; sequence MNIQILEDTHKVQPQPPASCSCYFNQAFHLPCRHILAMLSARR.

The protein is Zinc finger SWIM domain-containing protein 1 (ZSWIM1) of Homo sapiens (Human).